We begin with the raw amino-acid sequence, 290 residues long: Probable protein phosphatase 2C 62 (290 aa).

In terms of domain architecture, PPM-type phosphatase spans 38-288; that stretch reads KHGYHLVKGK…DDISCIVVKF (251 aa). Residues Asp75, Gly76, Asp240, and Asp279 each coordinate Mn(2+).

It belongs to the PP2C family. The cofactor is Mg(2+). Mn(2+) serves as cofactor.

It catalyses the reaction O-phospho-L-seryl-[protein] + H2O = L-seryl-[protein] + phosphate. It carries out the reaction O-phospho-L-threonyl-[protein] + H2O = L-threonyl-[protein] + phosphate. The sequence is that of Probable protein phosphatase 2C 62 from Oryza sativa subsp. japonica (Rice).